Here is a 327-residue protein sequence, read N- to C-terminus: Cyclic AMP-responsive element-binding protein 1 (327 aa).

Disordered regions lie at residues 1–29 (MTMD…TVQA) and 94–113 (SEDS…RREI). The 139-residue stretch at 8–146 (DNQQSGDAAV…IEEEKSEEET (139 aa)) folds into the KID domain. Residues 20–29 (AESQQMTVQA) show a composition bias toward polar residues. Ser-119 carries the phosphoserine; by CaMK1, CaMK2, CaMK4, PKB/AKT1 or PKB/AKT2, RPS6KA3, RPS6KA4, RPS6KA5 and SGK1 modification. Lys-122 is covalently cross-linked (Glycyl lysine isopeptide (Lys-Gly) (interchain with G-Cter in SUMO2)). Residues 126–149 (DLSSDAPGVPRIEEEKSEEETSAP) form a disordered region. Residue Ser-128 is modified to Phosphoserine; by CaMK2. Phosphoserine; by HIPK2 is present on Ser-257. Residues 269–327 (ARKREVRLMKNREAARECRRKKKEYVKCLENRVAVLENQNKTLIEELKALKDLYCHKSD) form the bZIP domain. Residues 270–295 (RKREVRLMKNREAARECRRKKKEYVK) are basic motif. Glycyl lysine isopeptide (Lys-Gly) (interchain with G-Cter in SUMO1) cross-links involve residues Lys-271 and Lys-290. The leucine-zipper stretch occupies residues 297–318 (LENRVAVLENQNKTLIEELKAL).

This sequence belongs to the bZIP family. As to quaternary structure, interacts with PPRC1. Binds DNA as a dimer. This dimer is stabilized by magnesium ions. Interacts, through the bZIP domain, with the coactivators CRTC1/TORC1, CRTC2/TORC2 and CRTC3/TORC3. When phosphorylated on Ser-119, binds CREBBP. Interacts with CREBL2; regulates CREB1 phosphorylation, stability and transcriptional activity. Interacts (phosphorylated form) with TOX3. Interacts with ARRB1. Binds to HIPK2. Interacts with SGK1. Interacts with TSSK4; this interaction facilitates phosphorylation on Ser-119. Forms a complex with KMT2A and CREBBP. Interacts with TOX4; CREB1 is required for full induction of TOX4-dependent activity and the interaction is increased by cAMP and inhibited by insulin. In terms of processing, phosphorylation of Ser-119 allows CREBBP binding. Stimulated by phosphorylation. Phosphorylation of both Ser-128 and Ser-119 in the SCN regulates the activity of CREB and participate in circadian rhythm generation. Phosphorylated upon calcium influx by CaMK4 and CaMK2 on Ser-119. CaMK4 is much more potent than CaMK2 in activating CREB. Phosphorylated by CaMK2 on Ser-128. Phosphorylation of Ser-128 blocks CREB-mediated transcription even when Ser-119 is phosphorylated. Phosphorylated by CaMK1. Phosphorylation of Ser-257 by HIPK2 in response to genotoxic stress promotes CREB1 activity, facilitating the recruitment of the coactivator CBP. Phosphorylated at Ser-119 by RPS6KA3, RPS6KA4 and RPS6KA5 in response to mitogenic or stress stimuli. CREBL2 positively regulates phosphorylation at Ser-119 thereby stimulating CREB1 transcriptional activity. In liver, phosphorylation is induced by fasting or glucagon in a circadian fashion. Phosphorylated by TSSK4 on Ser-119. Post-translationally, sumoylated with SUMO1. Sumoylation on Lys-290, but not on Lys-271, is required for nuclear localization of this protein. Sumoylation is enhanced under hypoxia, promoting nuclear localization and stabilization.

It is found in the nucleus. Phosphorylation-dependent transcription factor that stimulates transcription upon binding to the DNA cAMP response element (CRE), a sequence present in many viral and cellular promoters. Transcription activation is enhanced by the TORC coactivators which act independently of Ser-119 phosphorylation. Involved in different cellular processes including the synchronization of circadian rhythmicity and the differentiation of adipose cells. Regulates the expression of apoptotic and inflammatory response factors in cardiomyocytes in response to ERFE-mediated activation of AKT signaling. This is Cyclic AMP-responsive element-binding protein 1 (Creb1) from Rattus norvegicus (Rat).